The chain runs to 88 residues: Small ribosomal subunit protein uS17 (88 aa).

The protein belongs to the universal ribosomal protein uS17 family. In terms of assembly, part of the 30S ribosomal subunit.

Functionally, one of the primary rRNA binding proteins, it binds specifically to the 5'-end of 16S ribosomal RNA. This Methylorubrum extorquens (strain PA1) (Methylobacterium extorquens) protein is Small ribosomal subunit protein uS17.